Here is a 102-residue protein sequence, read N- to C-terminus: MKIAVMGDPDTALGFKLAGAHEVYSFGSSPLEIERANNKLKELVERDDIGIILITETLAQRVEVPEVEFPIILQIPDKSGSRFGEAQLREIVRRAIGVELKR.

Belongs to the V-ATPase F subunit family. In terms of assembly, has multiple subunits with at least A(3), B(3), C, D, E, F, H, I and proteolipid K(x).

The protein localises to the cell membrane. Component of the A-type ATP synthase that produces ATP from ADP in the presence of a proton gradient across the membrane. This is A-type ATP synthase subunit F from Thermococcus gammatolerans (strain DSM 15229 / JCM 11827 / EJ3).